Here is an 86-residue protein sequence, read N- to C-terminus: Large ribosomal subunit protein uL23 (86 aa).

This sequence belongs to the universal ribosomal protein uL23 family. As to quaternary structure, part of the 50S ribosomal subunit. Contacts protein L29.

Binds to 23S rRNA. One of the proteins that surrounds the polypeptide exit tunnel on the outside of the ribosome. The sequence is that of Large ribosomal subunit protein uL23 from Pyrococcus horikoshii (strain ATCC 700860 / DSM 12428 / JCM 9974 / NBRC 100139 / OT-3).